A 200-amino-acid polypeptide reads, in one-letter code: Peptidyl-tRNA hydrolase (200 aa).

Residue tyrosine 15 participates in tRNA binding. The active-site Proton acceptor is histidine 20. Positions 66, 68, and 114 each coordinate tRNA.

It belongs to the PTH family. As to quaternary structure, monomer.

The protein resides in the cytoplasm. The catalysed reaction is an N-acyl-L-alpha-aminoacyl-tRNA + H2O = an N-acyl-L-amino acid + a tRNA + H(+). In terms of biological role, hydrolyzes ribosome-free peptidyl-tRNAs (with 1 or more amino acids incorporated), which drop off the ribosome during protein synthesis, or as a result of ribosome stalling. Catalyzes the release of premature peptidyl moieties from peptidyl-tRNA molecules trapped in stalled 50S ribosomal subunits, and thus maintains levels of free tRNAs and 50S ribosomes. The polypeptide is Peptidyl-tRNA hydrolase (Ralstonia nicotianae (strain ATCC BAA-1114 / GMI1000) (Ralstonia solanacearum)).